The following is a 1459-amino-acid chain: Endogenous retrovirus group K member 7 Pol protein (1459 aa).

The 189-residue stretch at 57-245 folds into the Reverse transcriptase domain; that stretch reads LEKGHIEPSF…TPFHYLGMQI (189 aa). The short motif at 161 to 164 is the LPQG element; the sequence is LPQG. The short motif at 195–198 is the YXDD element; that stretch reads YIDD. In terms of domain architecture, RNase H type-1 spans 460–590; the sequence is LENALTVFTD…ADLLVSSALI (131 aa). The Mg(2+) site is built by Asp469, Glu497, Asp517, and Asp582. Residues 587–628 form an Integrase-type zinc finger; the sequence is SALIKAQELHALTHVNAAGLKNKFDVTWKQAKDIVQHCTQCQ. His596, His600, Cys624, and Cys627 together coordinate Zn(2+). Positions 642 to 803 constitute an Integrase catalytic domain; the sequence is RGLCPNALWQ…TSAEQHLTGK (162 aa). The segment at residues 811–859 is a DNA-binding region (integrase-type); it reads KLIWWKDNKNKTWEIGKVITWGRGFACVSPGENQLPVWIPTRHLKFYNE.

Belongs to the beta type-B retroviral polymerase family. HERV class-II K(HML-2) pol subfamily.

The catalysed reaction is DNA(n) + a 2'-deoxyribonucleoside 5'-triphosphate = DNA(n+1) + diphosphate. The enzyme catalyses Endonucleolytic cleavage to 5'-phosphomonoester.. In terms of biological role, early post-infection, the reverse transcriptase converts the viral RNA genome into double-stranded viral DNA. The RNase H domain of the reverse transcriptase performs two functions. It degrades the RNA template and specifically removes the RNA primer from the RNA/DNA hybrid. Following nuclear import, the integrase catalyzes the insertion of the linear, double-stranded viral DNA into the host cell chromosome. Endogenous Pol proteins may have kept, lost or modified their original function during evolution. The polypeptide is Endogenous retrovirus group K member 7 Pol protein (ERVK-7) (Homo sapiens (Human)).